Consider the following 297-residue polypeptide: CCAAT/enhancer-binding protein beta (297 aa).

Residues 1–22 (MHRLLAWDAACLPPPPAAFRPM) form a required for Lys-134 sumoylation region. Arg3 carries the post-translational modification Asymmetric dimethylarginine; by CARM1. A required for MYC transcriptional repression region spans residues 22–105 (MEVANFYYEP…YGAKPSKKPS (84 aa)). Lys39 bears the N6-acetyllysine; alternate mark. N6-methylated lysine; alternate is present on Lys39. Lys99 and Lys102 each carry N6-acetyllysine; by KAT2A and KAT2B. Residue Lys103 is modified to N6-acetyllysine; by KAT2A and KAT2B; alternate. Lys103 participates in a covalent cross-link: Glycyl lysine isopeptide (Lys-Gly) (interchain with G-Cter in SUMO2); alternate. The residue at position 105 (Ser105) is a Phosphoserine; by RPS6KA1 and PKC/PRKCA. Residue Lys134 forms a Glycyl lysine isopeptide (Lys-Gly) (interchain with G-Cter in SUMO2); alternate linkage. Lys134 participates in a covalent cross-link: Glycyl lysine isopeptide (Lys-Gly) (interchain with G-Cter in SUMO); alternate. Lys145 is covalently cross-linked (Glycyl lysine isopeptide (Lys-Gly) (interchain with G-Cter in SUMO2)). The tract at residues 172–201 (SGSSGSLSTSSSSSPPGTPSPADAKAAPAA) is disordered. Thr180 bears the Phosphothreonine; by GSK3-beta mark. O-linked (GlcNAc) serine glycosylation is found at Ser181 and Ser182. Position 185 is a phosphoserine; by GSK3-beta (Ser185). Thr189 carries the post-translational modification Phosphothreonine; by RPS6KA1, CDK2 and MAPK. Glycyl lysine isopeptide (Lys-Gly) (interchain with G-Cter in SUMO2) cross-links involve residues Lys212 and Lys214. In terms of domain architecture, bZIP spans 223 to 286 (SDEYKMRRER…STLRNLFKQL (64 aa)). A basic motif region spans residues 227–247 (KMRRERNNIAVRKSRDKAKMR). At Ser240 the chain carries Phosphoserine; by PKC/PRKCA. Positions 249–256 (LETQHKVL) are leucine-zipper. Ser277 bears the Phosphoserine; by CaMK2 mark. Lys284 is covalently cross-linked (Glycyl lysine isopeptide (Lys-Gly) (interchain with G-Cter in SUMO2)).

The protein belongs to the bZIP family. C/EBP subfamily. In terms of assembly, binds DNA as a homodimer and as a heterodimer. Interacts with MYB; within the complex, MYB and CEBPB bind to different promoter regions. Interacts with ATF4. Binds DNA as a heterodimer with ATF4. Can form stable heterodimers with CEBPA, CEBPD, CEBPE and CEBPG. Interacts with SIX1. Isoform 2 and isoform 3 also form heterodimers. Interacts with TRIM28 and PTGES2. Interacts with PRDM16. Interacts with CCDC85B. Forms a complex with THOC5. Interacts with ZNF638; this interaction increases transcriptional activation. Interacts with CIDEA and CIDEC; these interactions increase transcriptional activation of a subset of CEBPB downstream target genes. Interacts with DDIT3/CHOP. Interacts with EP300; recruits EP300 to chromatin. Interacts with RORA; the interaction disrupts interaction with EP300. Interacts (not methylated) with MED23, MED26, SMARCA2, SMARCB1 and SMARCC1. Interacts with KAT2A and KAT2B. Interacts with ATF5; EP300 is required for ATF5 and CEBPB interaction and DNA binding. Interacts with NFE2L1; the heterodimer represses expression of DSPP during odontoblast differentiation. Phosphorylated at Thr-189 by MAPK and CDK2, serves to prime phosphorylation at Thr-180 and Ser-185 by GSK3B and acquire DNA-binding as well as transactivation activities, required to induce adipogenesis. MAPK and CDK2 act sequentially to maintain Thr-189 in the primed phosphorylated state during mitotical cloning expansion and thereby progression of terminal differentiation. Phosphorylation at Ser-105 enhances transactivation activity. Phosphorylation at Ser-277 in response to calcium increases transactivation activity. Phosphorylated at Thr-189 by RPS6KA1. Post-translationally, methylated. Methylation at Arg-3 by CARM1 and at Lys-39 by EHMT2 inhibit transactivation activity. Methylation is probably inhibited by phosphorylation at Thr-189. In terms of processing, sumoylated by polymeric chains of SUMO2 or SUMO3. Sumoylation at Lys-134 is required for inhibition of T-cells proliferation. In adipocytes, sumoylation at Lys-134 by PIAS1 leads to ubiquitination and subsequent proteasomal degradation. Desumoylated by SENP2, which abolishes ubiquitination and stabilizes protein levels. Ubiquitinated, leading to proteasomal degradation. Post-translationally, O-glycosylated, glycosylation at Ser-181 and Ser-182 prevents phosphorylation on Thr-189, Ser-185 and Thr-180 and DNA binding activity which delays the adipocyte differentiation program. In terms of processing, acetylated. Acetylation at Lys-39 is an important and dynamic regulatory event that contributes to its ability to transactivate target genes, including those associated with adipogenesis and adipocyte function. Deacetylation by HDAC1 represses its transactivation activity. Acetylated by KAT2A and KAT2B within a cluster of lysine residues between amino acids 99-103, this acetylation is strongly induced by glucocorticoid treatment and enhances transactivation activity. In terms of tissue distribution, liver and lung.

The protein resides in the nucleus. It is found in the cytoplasm. Important transcription factor regulating the expression of genes involved in immune and inflammatory responses. Also plays a significant role in adipogenesis, as well as in the gluconeogenic pathway, liver regeneration, and hematopoiesis. The consensus recognition site is 5'-T[TG]NNGNAA[TG]-3'. Its functional capacity is governed by protein interactions and post-translational protein modifications. During early embryogenesis, plays essential and redundant roles with CEBPA. Has a promitotic effect on many cell types such as hepatocytes and adipocytes but has an antiproliferative effect on T-cells by repressing MYC expression, facilitating differentiation along the T-helper 2 lineage. Binds to regulatory regions of several acute-phase and cytokines genes and plays a role in the regulation of acute-phase reaction and inflammation. Also plays a role in intracellular bacteria killing. During adipogenesis, is rapidly expressed and, after activation by phosphorylation, induces CEBPA and PPARG, which turn on the series of adipocyte genes that give rise to the adipocyte phenotype. The delayed transactivation of the CEBPA and PPARG genes by CEBPB appears necessary to allow mitotic clonal expansion and thereby progression of terminal differentiation. Essential for female reproduction because of a critical role in ovarian follicle development. Restricts osteoclastogenesis: together with NFE2L1; represses expression of DSPP during odontoblast differentiation. Functionally, essential for gene expression induction in activated macrophages. Plays a major role in immune responses such as CD4(+) T-cell response, granuloma formation and endotoxin shock. Not essential for intracellular bacteria killing. Its function is as follows. Acts as a dominant negative through heterodimerization with isoform 2. Promotes osteoblast differentiation and osteoclastogenesis. This chain is CCAAT/enhancer-binding protein beta, found in Rattus norvegicus (Rat).